The sequence spans 190 residues: Potassium-transporting ATPase KdpC subunit (190 aa).

The chain crosses the membrane as a helical span at residues 7–27 (PALLMLLVWTLITGVFYPVLV).

This sequence belongs to the KdpC family. In terms of assembly, the system is composed of three essential subunits: KdpA, KdpB and KdpC.

Its subcellular location is the cell inner membrane. Part of the high-affinity ATP-driven potassium transport (or Kdp) system, which catalyzes the hydrolysis of ATP coupled with the electrogenic transport of potassium into the cytoplasm. This subunit acts as a catalytic chaperone that increases the ATP-binding affinity of the ATP-hydrolyzing subunit KdpB by the formation of a transient KdpB/KdpC/ATP ternary complex. The polypeptide is Potassium-transporting ATPase KdpC subunit (Methylococcus capsulatus (strain ATCC 33009 / NCIMB 11132 / Bath)).